The chain runs to 565 residues: uncharacterized protein (565 aa).

The next 13 helical transmembrane spans lie at 8–28 (ISFI…GIFF), 43–63 (LAIF…LALI), 95–115 (MTYL…ICSI), 137–157 (WLIW…IPPL), 167–187 (MVVS…GFIV), 227–247 (FTGI…FFAY), 268–288 (WALF…AVAL), 314–334 (IVFG…INGF), 367–387 (VVGV…FTVI), 424–444 (ATWT…GAIV), 460–480 (FLPA…VTII), 482–502 (PFIN…TVLG), and 516–536 (VMLI…VYVE).

This sequence to M.pneumoniae MPN_095 and MPN_096.

It localises to the cell membrane. This is an uncharacterized protein from Mycoplasma pneumoniae (strain ATCC 29342 / M129 / Subtype 1) (Mycoplasmoides pneumoniae).